The primary structure comprises 229 residues: IPRHPTLANVRQAFAEQPLAHAALNSLLVALATAAVTVLIATPMAYVMARHRTKAARAATGWVVVSQAFPFVLLIIPLFLVLKRLRLIDSLTGLVLVYVVWSLPFALWMLAGHARAVPAELEEAAAVDGAGRVRTLTSVTVPLLAPGIAATALFAFVTAWNEFFFALVLLKSPHRQTLPVVLTHFIGAEGVPTSPAGAAAFLATLPSLAFFALVQRRITSGLLTGAVKN.

One can recognise an ABC transmembrane type-1 domain in the interval A23–V214. A run of 5 helical transmembrane segments spans residues L27–V47, W62–L82, L91–A111, A150–L170, and S194–V214.

It belongs to the binding-protein-dependent transport system permease family. MalFG subfamily.

The protein resides in the cell membrane. May participate in oleandomycin secretion during antibiotic production. In Streptomyces antibioticus, this protein is Putative ABC transporter permease protein ORF1.